The following is a 916-amino-acid chain: Extracellular signal-regulated kinase 7 (916 aa).

Residues 25-319 (FDVRKRMGKG…AKEAIRHPYV (295 aa)) enclose the Protein kinase domain. Residues 31-39 (MGKGAYGIV) and Lys54 contribute to the ATP site. Asp149 (proton acceptor) is an active-site residue. 2 stretches are compositionally biased toward polar residues: residues 364–376 (CSNRTVSNSTPSS) and 390–403 (QARTTSAKQPTTSP). Disordered regions lie at residues 364–419 (CSNR…TQSR), 452–477 (PPAAAPPAPAATAPAVPRKSGDKSVP), 588–608 (PSETEHRQQREERAYQRQMKR), 711–742 (KKLQRSKESDEKDEDDRRALPEGIGGPGSQNY), 792–813 (ELNPAPDSGGRDSGSEHSPGRD), and 883–916 (CRHRHHKPNHHAPYDHMRPTEDDIQEADSLPESN). 3 stretches are compositionally biased toward basic and acidic residues: residues 590 to 608 (ETEHRQQREERAYQRQMKR), 715 to 730 (RSKESDEKDEDDRRAL), and 800 to 811 (GGRDSGSEHSPG). Positions 883 to 892 (CRHRHHKPNH) are enriched in basic residues. A compositionally biased stretch (basic and acidic residues) spans 894–903 (APYDHMRPTE).

It belongs to the protein kinase superfamily. Ser/Thr protein kinase family.

It catalyses the reaction L-seryl-[protein] + ATP = O-phospho-L-seryl-[protein] + ADP + H(+). It carries out the reaction L-threonyl-[protein] + ATP = O-phospho-L-threonyl-[protein] + ADP + H(+). In terms of biological role, atypical MAPK protein that regulates protein secretion in a kinase activity-dependent manner. In response to starvation regulates protein secretion by mediating transitional endoplasmic reticulum site disassembly. Mediates inhibition of insulin-like peptide secretion upon disturbed ribosome biogenesis and acts as a downstream effector of TP53. The chain is Extracellular signal-regulated kinase 7 from Drosophila melanogaster (Fruit fly).